We begin with the raw amino-acid sequence, 224 residues long: UPF0758 protein Nmul_A2138 (224 aa).

An MPN domain is found at 102–224 (AMDSPGPVRA…TLSFAEQGLI (123 aa)). H173, H175, and D186 together coordinate Zn(2+). The JAMM motif signature appears at 173–186 (HNHPSGAAEPSHAD).

The protein belongs to the UPF0758 family.

This Nitrosospira multiformis (strain ATCC 25196 / NCIMB 11849 / C 71) protein is UPF0758 protein Nmul_A2138.